A 128-amino-acid polypeptide reads, in one-letter code: Saitohin (128 aa).

The interval 77–128 (SYSSEESSRNGAEQGRQLSIEGPFQGQNCPSHPAAALPLPMRGESQATSCQV) is disordered.

As to quaternary structure, interacts with PRDX6.

The protein resides in the cytoplasm. It localises to the nucleus. The protein is Saitohin (STH) of Gorilla gorilla gorilla (Western lowland gorilla).